The following is a 265-amino-acid chain: 6-carboxyhexanoate--CoA ligase (265 aa).

It belongs to the BioW family. Homodimer. It depends on Mg(2+) as a cofactor.

It carries out the reaction heptanedioate + ATP + CoA = 6-carboxyhexanoyl-CoA + AMP + diphosphate. Its pathway is metabolic intermediate metabolism; pimeloyl-CoA biosynthesis; pimeloyl-CoA from pimelate: step 1/1. Its function is as follows. Catalyzes the transformation of pimelate into pimeloyl-CoA with concomitant hydrolysis of ATP to AMP. The protein is 6-carboxyhexanoate--CoA ligase of Syntrophotalea carbinolica (strain DSM 2380 / NBRC 103641 / GraBd1) (Pelobacter carbinolicus).